The chain runs to 338 residues: Holliday junction branch migration complex subunit RuvB (338 aa).

Positions 1–181 are large ATPase domain (RuvB-L); the sequence is MTTRTISPEK…FGVISRLEFY (181 aa). ATP contacts are provided by residues leucine 20, arginine 21, glycine 62, lysine 65, threonine 66, threonine 67, 128 to 130, arginine 171, tyrosine 181, and arginine 218; that span reads EDF. Mg(2+) is bound at residue threonine 66. The tract at residues 182–252 is small ATPAse domain (RuvB-S); it reads TDAELSTIVT…VVDESLKLLE (71 aa). The segment at 255-338 is head domain (RuvB-H); it reads EKGFDQMDRT…APAPGQGALF (84 aa). Residues arginine 291, arginine 310, and arginine 315 each contribute to the DNA site.

The protein belongs to the RuvB family. Homohexamer. Forms an RuvA(8)-RuvB(12)-Holliday junction (HJ) complex. HJ DNA is sandwiched between 2 RuvA tetramers; dsDNA enters through RuvA and exits via RuvB. An RuvB hexamer assembles on each DNA strand where it exits the tetramer. Each RuvB hexamer is contacted by two RuvA subunits (via domain III) on 2 adjacent RuvB subunits; this complex drives branch migration. In the full resolvosome a probable DNA-RuvA(4)-RuvB(12)-RuvC(2) complex forms which resolves the HJ.

It localises to the cytoplasm. It catalyses the reaction ATP + H2O = ADP + phosphate + H(+). In terms of biological role, the RuvA-RuvB-RuvC complex processes Holliday junction (HJ) DNA during genetic recombination and DNA repair, while the RuvA-RuvB complex plays an important role in the rescue of blocked DNA replication forks via replication fork reversal (RFR). RuvA specifically binds to HJ cruciform DNA, conferring on it an open structure. The RuvB hexamer acts as an ATP-dependent pump, pulling dsDNA into and through the RuvAB complex. RuvB forms 2 homohexamers on either side of HJ DNA bound by 1 or 2 RuvA tetramers; 4 subunits per hexamer contact DNA at a time. Coordinated motions by a converter formed by DNA-disengaged RuvB subunits stimulates ATP hydrolysis and nucleotide exchange. Immobilization of the converter enables RuvB to convert the ATP-contained energy into a lever motion, pulling 2 nucleotides of DNA out of the RuvA tetramer per ATP hydrolyzed, thus driving DNA branch migration. The RuvB motors rotate together with the DNA substrate, which together with the progressing nucleotide cycle form the mechanistic basis for DNA recombination by continuous HJ branch migration. Branch migration allows RuvC to scan DNA until it finds its consensus sequence, where it cleaves and resolves cruciform DNA. This Geobacter sulfurreducens (strain ATCC 51573 / DSM 12127 / PCA) protein is Holliday junction branch migration complex subunit RuvB.